We begin with the raw amino-acid sequence, 698 residues long: Elongation factor G (698 aa).

The region spanning 10-285 is the tr-type G domain; it reads AGTRNIGIMA…AVVDFLPNPL (276 aa). GTP is bound by residues 19–26, 83–87, and 137–140; these read AHIDAGKT, DTPGH, and NKMD.

The protein belongs to the TRAFAC class translation factor GTPase superfamily. Classic translation factor GTPase family. EF-G/EF-2 subfamily.

Its subcellular location is the cytoplasm. Catalyzes the GTP-dependent ribosomal translocation step during translation elongation. During this step, the ribosome changes from the pre-translocational (PRE) to the post-translocational (POST) state as the newly formed A-site-bound peptidyl-tRNA and P-site-bound deacylated tRNA move to the P and E sites, respectively. Catalyzes the coordinated movement of the two tRNA molecules, the mRNA and conformational changes in the ribosome. The polypeptide is Elongation factor G (Frankia casuarinae (strain DSM 45818 / CECT 9043 / HFP020203 / CcI3)).